The chain runs to 25 residues: Toxin Tpa3 (25 aa).

This sequence belongs to the non-disulfide-bridged peptide (NDBP) superfamily. Expressed by the venom gland.

The protein localises to the secreted. Unknown. Is not toxic to mammals. The chain is Toxin Tpa3 from Tityus pachyurus (Colombian scorpion).